The primary structure comprises 82 residues: MGRRKSKRKPPPKRKAIEPLDQQFNCPFCNHEKSCEVKMDRAKNTAMIQCTVCLEDFHTTTNVLSEPIDVYNDWVDACESAN.

Zn(2+) contacts are provided by Cys-26, Cys-29, Cys-50, and Cys-53.

This sequence belongs to the ELOF1 family.

The protein resides in the nucleus. Transcription elongation factor implicated in the maintenance of proper chromatin structure in actively transcribed regions. This chain is Transcription elongation factor 1 homolog, found in Manduca sexta (Tobacco hawkmoth).